A 649-amino-acid polypeptide reads, in one-letter code: Acetyl-coenzyme A synthetase (649 aa).

Residues 191–194 (RAGR), threonine 311, and asparagine 335 contribute to the CoA site. ATP is bound by residues 387 to 389 (GEP), 411 to 416 (DTWWQT), aspartate 500, and arginine 515. CoA is bound at residue serine 523. Position 526 (arginine 526) interacts with ATP. Mg(2+)-binding residues include valine 537, phenylalanine 539, and isoleucine 542. CoA is bound at residue arginine 584. The residue at position 609 (lysine 609) is an N6-acetyllysine.

This sequence belongs to the ATP-dependent AMP-binding enzyme family. Mg(2+) serves as cofactor. Post-translationally, acetylated. Deacetylation by the SIR2-homolog deacetylase activates the enzyme.

The enzyme catalyses acetate + ATP + CoA = acetyl-CoA + AMP + diphosphate. Catalyzes the conversion of acetate into acetyl-CoA (AcCoA), an essential intermediate at the junction of anabolic and catabolic pathways. AcsA undergoes a two-step reaction. In the first half reaction, AcsA combines acetate with ATP to form acetyl-adenylate (AcAMP) intermediate. In the second half reaction, it can then transfer the acetyl group from AcAMP to the sulfhydryl group of CoA, forming the product AcCoA. This chain is Acetyl-coenzyme A synthetase, found in Photobacterium profundum (strain SS9).